Here is a 256-residue protein sequence, read N- to C-terminus: Small ribosomal subunit protein eS1B (256 aa).

N-acetylalanine; partial is present on Ala-2.

Belongs to the eukaryotic ribosomal protein eS1 family. In terms of assembly, component of the small ribosomal subunit. Mature ribosomes consist of a small (40S) and a large (60S) subunit. The 40S subunit contains about 33 different proteins and 1 molecule of RNA (18S). The 60S subunit contains about 49 different proteins and 3 molecules of RNA (25S, 5.8S and 5S).

Its subcellular location is the cytoplasm. This chain is Small ribosomal subunit protein eS1B, found in Clavispora lusitaniae (strain ATCC 42720) (Yeast).